Consider the following 208-residue polypeptide: ATP phosphoribosyltransferase (208 aa).

The protein belongs to the ATP phosphoribosyltransferase family. Short subfamily. Heteromultimer composed of HisG and HisZ subunits.

The protein localises to the cytoplasm. The catalysed reaction is 1-(5-phospho-beta-D-ribosyl)-ATP + diphosphate = 5-phospho-alpha-D-ribose 1-diphosphate + ATP. It functions in the pathway amino-acid biosynthesis; L-histidine biosynthesis; L-histidine from 5-phospho-alpha-D-ribose 1-diphosphate: step 1/9. Catalyzes the condensation of ATP and 5-phosphoribose 1-diphosphate to form N'-(5'-phosphoribosyl)-ATP (PR-ATP). Has a crucial role in the pathway because the rate of histidine biosynthesis seems to be controlled primarily by regulation of HisG enzymatic activity. This is ATP phosphoribosyltransferase from Clostridioides difficile (strain 630) (Peptoclostridium difficile).